Consider the following 794-residue polypeptide: Potassium transporter 2 (794 aa).

The Cytoplasmic portion of the chain corresponds to 1–21 (MDLNLGKCCGSRSSKKESWRS). Residues 22–42 (VLLLAYQSLGVVYGDLSISPL) form a helical membrane-spanning segment. The Extracellular portion of the chain corresponds to 43-64 (YVFKSTFAEDIQHSETNEEIYG). A helical transmembrane segment spans residues 65-85 (VMSFVFWTLTLVPLLKYVFIV). Residues 86–153 (LRADDNGEGG…EKHKWLHTAL (68 aa)) are Cytoplasmic-facing. A helical transmembrane segment spans residues 154-174 (LLLVLLGTCMVIGDGLLTPAI). The Extracellular portion of the chain corresponds to 175–193 (SVFSAVSGLELNMSKEHHQ). A helical membrane pass occupies residues 194-214 (YAVIPITCFILVCLFSLQHFG). Over 215 to 217 (THR) the chain is Cytoplasmic. The helical transmembrane segment at 218-238 (VGFVFAPIVLTWLLCISGIGL) threads the bilayer. Residues 239 to 265 (YNIIQWNPHIYKALSPTYMFMFLRKTR) lie on the Extracellular side of the membrane. Residues 266–286 (VSGWMSLGGILLCITGAEAMF) form a helical membrane-spanning segment. At 287–294 (ADLGHFNY) the chain is on the cytoplasmic side. A helical membrane pass occupies residues 295 to 315 (AAIQIAFTFLVYPALILAYMG). The Extracellular portion of the chain corresponds to 316–339 (QAAYLSRHHHSAHAIGFYVSVPKC). A helical membrane pass occupies residues 340–360 (LHWPVLAVAILASVVGSQAII). Residues 361 to 391 (SGTFSIINQSQSLGCFPRVKVIHTSDKMHGQ) lie on the Cytoplasmic side of the membrane. Residues 392 to 412 (IYIPEINWMLMILCIAVTIGF) form a helical membrane-spanning segment. Residues 413–417 (RDVKH) lie on the Extracellular side of the membrane. 2 consecutive transmembrane segments (helical) span residues 418–438 (LGNASGLAVMAVMLVTTCLTS) and 439–459 (LVIVLCWHKPPILALAFLLFF). At 460–476 (GSIELLYFSASLTKFRE) the chain is on the extracellular side. A helical membrane pass occupies residues 477-497 (GAWLPILLSLIFMIIMFVWHY). The Cytoplasmic segment spans residues 498-794 (TTIKKYEFDL…LLEVGMVYVV (297 aa)).

It belongs to the HAK/KUP transporter (TC 2.A.72.3) family. Slightly detected in roots, stems, leaves and flowers of mature plants and in potassium-starved plants.

The protein localises to the cell membrane. Low-affinity potassium transporter. Could mediate the potassium-dependent cell expansion in growing tissues. The chain is Potassium transporter 2 (POT2) from Arabidopsis thaliana (Mouse-ear cress).